Consider the following 380-residue polypeptide: GDP-mannose:cellobiosyl-diphosphopolyprenol alpha-mannosyltransferase (380 aa).

It belongs to the glycosyltransferase group 1 family. Glycosyltransferase 4 subfamily.

It carries out the reaction beta-D-Glc-(1-&gt;4)-alpha-D-Glc-di-trans,octa-cis-undecaprenyl diphosphate + GDP-alpha-D-mannose = alpha-D-Man-(1-&gt;3)-beta-D-Glc-(1-&gt;4)-alpha-D-Glc-1-di-trans,octa-cis-undecaprenyl diphosphate + GDP + H(+). Functionally, involved in the biosynthesis of the exopolysaccharide xanthan, a polymer that is comprised of repeating pentasaccharide units with the structure of a beta-(1,4)-linked D-glucose backbone with trisaccharide side chains composed of mannose-beta-(1,4)-glucuronic acid-beta-(1,2)-mannose attached to alternate glucose residues in the backbone by alpha-(1,3) linkages. Xanthan is involved in pathogenicity but has also been used in a variety of applications as a specialty polymer for commercial applications, including food additives, where they act as viscosifying, stabilizing, emulsifying, or gelling agents. This Xanthomonas campestris protein is GDP-mannose:cellobiosyl-diphosphopolyprenol alpha-mannosyltransferase (gumH).